The primary structure comprises 342 residues: Protein-glutamate methylesterase/protein-glutamine glutaminase 4 (342 aa).

Residues 2–119 (NIGIVNDLPL…GGSADPSQPL (118 aa)) form the Response regulatory domain. A 4-aspartylphosphate modification is found at aspartate 53. One can recognise a CheB-type methylesterase domain in the interval 144–337 (PAPQGALPPL…DQLISLVQRN (194 aa)). Residues serine 159, histidine 186, and aspartate 279 contribute to the active site.

This sequence belongs to the CheB family. In terms of processing, phosphorylated by CheA. Phosphorylation of the N-terminal regulatory domain activates the methylesterase activity.

It is found in the cytoplasm. It carries out the reaction [protein]-L-glutamate 5-O-methyl ester + H2O = L-glutamyl-[protein] + methanol + H(+). The enzyme catalyses L-glutaminyl-[protein] + H2O = L-glutamyl-[protein] + NH4(+). Functionally, involved in chemotaxis. Part of a chemotaxis signal transduction system that modulates chemotaxis in response to various stimuli. Catalyzes the demethylation of specific methylglutamate residues introduced into the chemoreceptors (methyl-accepting chemotaxis proteins or MCP) by CheR. Also mediates the irreversible deamidation of specific glutamine residues to glutamic acid. The sequence is that of Protein-glutamate methylesterase/protein-glutamine glutaminase 4 from Burkholderia thailandensis (strain ATCC 700388 / DSM 13276 / CCUG 48851 / CIP 106301 / E264).